Reading from the N-terminus, the 1485-residue chain is Chromosome partition protein MukB (1485 aa).

Residue 34 to 41 participates in ATP binding; the sequence is GGNGAGKS. Coiled coils occupy residues 337–480 and 509–605; these read LNLV…QAYQ and QHLA…PVWL. The interval 666–783 is flexible hinge; sequence PSGAEDARLI…EVPLFGRAAR (118 aa). Coiled coils occupy residues 835–915 and 977–1116; these read EAEI…IQQH and GMLT…AKAG.

Belongs to the SMC family. MukB subfamily. Homodimerization via its hinge domain. Binds to DNA via its C-terminal region. Interacts, and probably forms a ternary complex, with MukE and MukF via its C-terminal region. The complex formation is stimulated by calcium or magnesium. Interacts with tubulin-related protein FtsZ.

The protein resides in the cytoplasm. Its subcellular location is the nucleoid. Its function is as follows. Plays a central role in chromosome condensation, segregation and cell cycle progression. Functions as a homodimer, which is essential for chromosome partition. Involved in negative DNA supercoiling in vivo, and by this means organize and compact chromosomes. May achieve or facilitate chromosome segregation by condensation DNA from both sides of a centrally located replisome during cell division. This is Chromosome partition protein MukB from Yersinia pseudotuberculosis serotype IB (strain PB1/+).